The chain runs to 275 residues: Large ribosomal subunit protein uL2 (275 aa).

2 disordered regions span residues 36 to 55 and 223 to 275; these read PKKRGSGRNNNGHITVRHKG and VVMN…RHAR.

It belongs to the universal ribosomal protein uL2 family. As to quaternary structure, part of the 50S ribosomal subunit. Forms a bridge to the 30S subunit in the 70S ribosome.

Functionally, one of the primary rRNA binding proteins. Required for association of the 30S and 50S subunits to form the 70S ribosome, for tRNA binding and peptide bond formation. It has been suggested to have peptidyltransferase activity; this is somewhat controversial. Makes several contacts with the 16S rRNA in the 70S ribosome. This chain is Large ribosomal subunit protein uL2, found in Thiobacillus denitrificans (strain ATCC 25259 / T1).